We begin with the raw amino-acid sequence, 484 residues long: Putative tyramine receptor 2 (484 aa).

Residues 1–54 (MVRVELQAASLMNGSSAAEEPQDALVGGDACGGRRPPSVLGVRLAVPEWEVAVT) lie on the Extracellular side of the membrane. An N-linked (GlcNAc...) asparagine glycan is attached at asparagine 13. Residues 55 to 77 (AVSLSLIILITIVGNVLVVLSVF) form a helical membrane-spanning segment. The Cytoplasmic segment spans residues 78-87 (TYKPLRIVQN). Residues 88-109 (FFIVSLAVADLTVAVLVMPFNV) form a helical membrane-spanning segment. Residues 110–126 (AYSLIQRWVFGIVVCKM) lie on the Extracellular side of the membrane. Residues cysteine 124 and cysteine 203 are joined by a disulfide bond. Residues 127-147 (WLTCDVLCCTASILNLCAIAL) form a helical membrane-spanning segment. The Cytoplasmic portion of the chain corresponds to 148 to 167 (DRYWAITDPINYAQKRTLRR). Residues 168 to 190 (VLAMIAGVWLLSGVISSPPLIGW) form a helical membrane-spanning segment. The Extracellular portion of the chain corresponds to 191-215 (NDWPMEFNDTTPCQLTEEQGYVIYS). Asparagine 198 is a glycosylation site (N-linked (GlcNAc...) asparagine). Residues 216 to 237 (SLGSFFIPLFIMTIVYVEIFIA) traverse the membrane as a helical segment. Over 238–411 (TKRRLRERAK…LSKERRAART (174 aa)) the chain is Cytoplasmic. The segment covering 253 to 280 (SAMKQQMAAQAVPSSVPSHDQESVSSET) has biased composition (polar residues). 2 disordered regions span residues 253–322 (SAMK…PAMV) and 350–383 (TTTT…PTPV). Basic residues predominate over residues 295–306 (EKRRKTKKKSKK). The segment covering 350–360 (TTTTTTTTTTT) has biased composition (low complexity). A compositionally biased stretch (polar residues) spans 361–378 (AVTDSPRSRTASQKGSTA). A helical transmembrane segment spans residues 412-433 (LGIIMGVFVVCWLPFFLMYVIV). Residues 434-448 (PFCNPSCKPSPKLVN) are Extracellular-facing. The chain crosses the membrane as a helical span at residues 449–470 (FITWLGYINSALNPIIYTIFNL). The Cytoplasmic portion of the chain corresponds to 471-484 (DFRRAFKKLLHFKT).

It belongs to the G-protein coupled receptor 1 family.

The protein localises to the cell membrane. In terms of biological role, G-protein coupled receptor for tyramine, a known neurotransmitter and neuromodulator and direct precursor of octopamine. The polypeptide is Putative tyramine receptor 2 (GCR2) (Locusta migratoria (Migratory locust)).